We begin with the raw amino-acid sequence, 130 residues long: MRKESFLTFYFSNHLYLCPAIIRLSSVCTLARTDYYLPSNIAVTYDIQISSLGFTYRIDFFLALFSDPARPFLTEINRKIGQYACVIREREQAGEYSFHYSLCININVYILHIHIYIDRYIYAYINAQVQ.

The chain crosses the membrane as a helical span at residues 15–31 (LYLCPAIIRLSSVCTLA).

It localises to the membrane. This is an uncharacterized protein from Saccharomyces cerevisiae (strain ATCC 204508 / S288c) (Baker's yeast).